A 150-amino-acid chain; its full sequence is UPF0208 membrane protein VV1_2222 (150 aa).

2 helical membrane passes run 42 to 62 (FGIK…MAFN) and 70 to 90 (AIVM…WLGH).

Belongs to the UPF0208 family.

Its subcellular location is the cell inner membrane. The sequence is that of UPF0208 membrane protein VV1_2222 from Vibrio vulnificus (strain CMCP6).